Consider the following 161-residue polypeptide: E3 ubiquitin ligase complex SCF subunit sconC (161 aa).

Residues 103–161 (ILAANYLDIKGLLDVGCKTVANMIKGKSPEEIRKTFNIQNDFTPEEEDQIRRENEWAEE) are interaction with the F-box domain of F-box proteins.

It belongs to the SKP1 family. In terms of assembly, component of the SCF (SKP1-CUL1-F-box protein) E3 ubiquitin ligase complexes.

It functions in the pathway protein modification; protein ubiquitination. Functionally, essential component of the SCF (SKP1-CUL1-F-box protein) E3 ubiquitin ligase complexes, which mediate the ubiquitination and subsequent proteasomal degradation of target proteins. Controls sulfur metabolite repression, probably by mediating the inactivation or degradation of the metR transcription factor. This chain is E3 ubiquitin ligase complex SCF subunit sconC (sconC), found in Aspergillus terreus (strain NIH 2624 / FGSC A1156).